We begin with the raw amino-acid sequence, 147 residues long: uncharacterized protein (147 aa).

A helical membrane pass occupies residues 13 to 35 (NSRINLLGILVLNVVCGKSSIFF).

Its subcellular location is the membrane. This is an uncharacterized protein from Saccharomyces cerevisiae (strain ATCC 204508 / S288c) (Baker's yeast).